The sequence spans 543 residues: Aluminum-activated malate transporter 14 (543 aa).

Helical transmembrane passes span 56–76 (VGVSLTLVSLLYLMEPLFKGI), 80–100 (AIWAVMTVVVVLEFSAGATLC), 106–126 (GLGTLIAGSLAFFIEFVANDS), 129–149 (IFRAIFIGAAVFIIGALITYL), 164–184 (LIFLLTFNLITVSSYRVDTVI), and 191–211 (FYTIAMGVGICLLMSLLVFPI). Residues 416–438 (DTNEAASYQNTGTPRGERMSRFG) are disordered. Positions 419–428 (EAASYQNTGT) are enriched in polar residues. Positions 445–472 (RLRADTLERRSAAATNERKILRQQLSRI) form a coiled coil.

This sequence belongs to the aromatic acid exporter (TC 2.A.85) family.

It localises to the membrane. In terms of biological role, malate transporter. The sequence is that of Aluminum-activated malate transporter 14 (ALMT14) from Arabidopsis thaliana (Mouse-ear cress).